Here is a 286-residue protein sequence, read N- to C-terminus: Urease accessory protein UreD (286 aa).

The protein belongs to the UreD family. In terms of assembly, ureD, UreF and UreG form a complex that acts as a GTP-hydrolysis-dependent molecular chaperone, activating the urease apoprotein by helping to assemble the nickel containing metallocenter of UreC. The UreE protein probably delivers the nickel.

The protein resides in the cytoplasm. Required for maturation of urease via the functional incorporation of the urease nickel metallocenter. This Rhodopseudomonas palustris (strain BisA53) protein is Urease accessory protein UreD.